Here is a 125-residue protein sequence, read N- to C-terminus: Snaclec B6 (125 aa).

3 disulfides stabilise this stretch: Cys2-Cys13, Cys30-Cys119, and Cys96-Cys111. The C-type lectin domain maps to 9–120 (HEGHCYKVFK…CNISQYFVCQ (112 aa)). Residue Asn95 is glycosylated (N-linked (GlcNAc...) asparagine). An N-linked (GlcNAc...) asparagine glycan is attached at Asn112.

This sequence belongs to the snaclec family. Heterodimer; disulfide-linked. In terms of tissue distribution, expressed by the venom gland.

The protein resides in the secreted. Functionally, interferes with one step of hemostasis (modulation of platelet aggregation, or coagulation cascade, for example). This Macrovipera lebetinus (Levantine viper) protein is Snaclec B6.